Reading from the N-terminus, the 380-residue chain is uncharacterized protein (380 aa).

In terms of domain architecture, Peptidase M14 spans 111–369 (APYSMERHHD…DCLAILAEMI (259 aa)). The Zn(2+) site is built by His164, Glu167, and His257. Glu333 acts as the Proton donor/acceptor in catalysis.

Requires Zn(2+) as cofactor.

This is an uncharacterized protein from Zymomonas mobilis subsp. mobilis (strain ATCC 31821 / ZM4 / CP4).